The sequence spans 107 residues: Probable monothiol glutaredoxin 2 (107 aa).

Residues 7-107 (LEFIQNAIKK…LEKMLKDVVV (101 aa)) enclose the Glutaredoxin domain. Residue K24 coordinates glutathione. C32 is a [2Fe-2S] cluster binding site. Residues R61, F73, and 86–87 (CD) each bind glutathione.

This sequence belongs to the glutaredoxin family. Monothiol subfamily.

The polypeptide is Probable monothiol glutaredoxin 2 (grxC2) (Rickettsia prowazekii (strain Madrid E)).